We begin with the raw amino-acid sequence, 449 residues long: MSQVLGKPQPQGEDGGEDQEEDELVGLAGYEDGPESSDAELDSGPEEGESRRNSWMPRSWCSEATRHECWEPGLWRSSHLLGIGGGWRMLRRQRQADFFLDFSDPFSTEVKPRILLMGLRRSGKSSIQKVVFHKMSPSETLFLESTNRICREDVSNSSFVNFQIWDFPGQIDFFDPTFDYEMIFRGTGALIFVIDSQDDYMEALARLHLTVTRAYKVNTDINFEVFIHKVDGLSDDHKIETQRDIHQRANDDLADAGLEKIHLSFYLTSIYDHSIFEAFSKVVQKLIPQLPTLENLLNIFISNSGIEKAFLFDVVSKIYIATDSTPVDMQTYELCCDMIDVVIDISCIYGLKEDGAGAPYDKDSTAIIKLNNTTVLYLKEVTKFLALVCFVREESFERKGLIDYNFHCFRKAIHEVFEVRMKMVKSRKAQSRLPKKTGATPNGTPRVLL.

The disordered stretch occupies residues methionine 1–tryptophan 55. 2 stretches are compositionally biased toward acidic residues: residues aspartate 14–leucine 24 and aspartate 32–glutamate 47. The GTP site is built by arginine 120, arginine 121, serine 122, glycine 123, lysine 124, serine 125, serine 126, and threonine 140. The GDP site is built by arginine 121, serine 122, glycine 123, lysine 124, serine 125, serine 126, threonine 140, glutamate 144, and threonine 146. GTP contacts are provided by threonine 146, glycine 169, histidine 228, lysine 229, and aspartate 231. Positions 228, 229, 231, 269, and 270 each coordinate GDP. Position 270 (isoleucine 270) interacts with GTP. The tract at residues lysine 428–leucine 449 is disordered.

It belongs to the GTR/RAG GTP-binding protein family. Forms a heterodimer with RRAGA in a sequence-independent manner and RRAGB. Heterodimerization stabilizes RRAG proteins. The GDP-bound form of RRAGD (in complex with the GTP-bound form of RRAGA or RRAGB), interacts with RPTOR, thereby promoting recruitment of mTORC1 to the lysosomes. Component of the lysosomal folliculin complex (LFC), composed of FLCN, FNIP1 (or FNIP2), RagA/RRAGA or RagB/RRAGB GDP-bound, RagC/RRAGC or RagD/RRAGD GTP-bound, and Ragulator. Interacts with NOL8. Interacts with SH3BP4; the interaction with this negative regulator is most probably direct, preferentially occurs with the inactive GDP-bound form of RRAGD and is negatively regulated by amino acids. The Rag heterodimer interacts with SLC38A9; the probable amino acid sensor. Interacts with SESN1, SESN2 and SESN3. The GDP-bound form interacts with TFEB. The GDP-bound form interacts with TFE3. Expressed in the distal tubule of the kidney.

Its subcellular location is the cytoplasm. It localises to the nucleus. The protein localises to the lysosome membrane. The enzyme catalyses GTP + H2O = GDP + phosphate + H(+). The activation of RagD/RRAGD is mediated by a GTPase activating protein (GAP). In high-amino acid conditions, activated by GTPase activating protein FLCN that stimulates RRAGD GTPase activity to turn it into its active GDP-bound form. In response to amino acid depletion, the GATOR1 complex inactivates RagC/RRAGC by securing the GTP-bound inactive form. In terms of biological role, guanine nucleotide-binding protein that plays a crucial role in the cellular response to amino acid availability through regulation of the mTORC1 signaling cascade. Forms heterodimeric Rag complexes with RagA/RRAGA or RagB/RRAGB and cycles between an inactive GTP-bound and an active GDP-bound form: RagD/RRAGD is in its active form when GDP-bound RagD/RRAGD forms a complex with GTP-bound RagA/RRAGA (or RagB/RRAGB) and in an inactive form when GTP-bound RagD/RRAGD heterodimerizes with GDP-bound RagA/RRAGA (or RagB/RRAGB). In its active form, promotes the recruitment of mTORC1 to the lysosomes and its subsequent activation by the GTPase RHEB. This is a crucial step in the activation of the MTOR signaling cascade by amino acids. Also plays a central role in the non-canonical mTORC1 complex, which acts independently of RHEB and specifically mediates phosphorylation of MiT/TFE factors TFEB and TFE3: GDP-bound RagD/RRAGD mediates recruitment of MiT/TFE factors TFEB and TFE3. This Mus musculus (Mouse) protein is Ras-related GTP-binding protein D.